A 357-amino-acid chain; its full sequence is Selenide, water dikinase (357 aa).

Cysteine 25 is an active-site residue. Residues lysine 28 and 57–59 each bind ATP; that span reads TAD. Mg(2+) is bound at residue aspartate 60. Residues aspartate 77, aspartate 100, and 148-150 contribute to the ATP site; that span reads GHS. Aspartate 100 contributes to the Mg(2+) binding site. Aspartate 236 is a binding site for Mg(2+).

It belongs to the selenophosphate synthase 1 family. Class I subfamily. As to quaternary structure, homodimer. Requires Mg(2+) as cofactor.

The catalysed reaction is hydrogenselenide + ATP + H2O = selenophosphate + AMP + phosphate + 2 H(+). In terms of biological role, synthesizes selenophosphate from selenide and ATP. This chain is Selenide, water dikinase, found in Pseudomonas straminea.